We begin with the raw amino-acid sequence, 120 residues long: UPF0145 protein Bcenmc03_5217 (120 aa).

The protein belongs to the UPF0145 family.

The polypeptide is UPF0145 protein Bcenmc03_5217 (Burkholderia orbicola (strain MC0-3)).